Reading from the N-terminus, the 1138-residue chain is Ras guanine nucleotide exchange factor N (1138 aa).

LRR repeat units lie at residues M1–L16, H18–G39, and T43–L64. 7 disordered regions span residues A126 to N180, F239 to K301, N319 to N360, I389 to Q411, G473 to N540, A601 to S643, and M660 to G680. Residues K140–T158 show a composition bias toward low complexity. Residues R263–I275 show a composition bias toward polar residues. Over residues S283–S299 the composition is skewed to gly residues. Over residues G326–I352 the composition is skewed to low complexity. A compositionally biased stretch (basic and acidic residues) spans R393–I405. Over residues P487–I496 the composition is skewed to pro residues. Positions D498–I511 are enriched in polar residues. 2 stretches are compositionally biased toward low complexity: residues N512–N540 and N605–Q634. The 123-residue stretch at G733–R855 folds into the N-terminal Ras-GEF domain. The 228-residue stretch at R891 to K1118 folds into the Ras-GEF domain.

Its function is as follows. Promotes the exchange of Ras-bound GDP by GTP. May play a role in chemotaxis. The protein is Ras guanine nucleotide exchange factor N (gefN) of Dictyostelium discoideum (Social amoeba).